The chain runs to 896 residues: NEDD4-binding protein 1 (896 aa).

The KH-like domain occupies 59–143 (QEAVHSAKEY…IQQFVKLFEN (85 aa)). Ser-226 is modified (phosphoserine). Phosphothreonine is present on Thr-242. Ser-258 and Ser-300 each carry phosphoserine. Disordered stretches follow at residues 403-430 (YPET…PKKT) and 488-507 (ETDG…VNFV). Positions 414–430 (VYSSTNELTTDSTPKKT) are enriched in polar residues. Ser-562 carries the phosphoserine modification. The 153-residue stretch at 617–769 (LKHIVIDGSN…LGRSGPRLEE (153 aa)) folds into the RNase NYN domain. Residues 801 to 821 (GTQAASTSHQPPTRIQGAPSS) are disordered. The segment covering 803-813 (QAASTSHQPPT) has biased composition (polar residues). Positions 849-896 (RSSAETNELREALLKIFPDSEQRLKIDQILVAHPYMKDLNALSAMVLD) are coCUN.

The protein belongs to the N4BP1 family. In terms of assembly, interacts with NEDD4. Interacts with ITCH (via WW domain 2). Proteolytically cleaved by CASP8 downstream of TLR3 or TLR4, leading to its inactivation. Mainly cleaved at Asp-490 by CASP8. Cleaved by caspase-like protein MALT1 in T-cells following TCR-mediated activation, leading to its inactivation and subsequent viral reactivation during HIV-1 infection. In terms of processing, mono- and polyubiquitinated on the CoCUN region. Monoubiquitinated by NEDD4. Polyubiquitinated, leading to its degradation by the proteasome. Sumoylated with SUMO1, abrogating polyubiquitination and subsequent degradation. Desumoylated by SENP1, leading to accumulation in PML nuclear bodies. In terms of tissue distribution, detected in heart, lung, brain, liver, skeletal muscle, pancreas, kidney, spleen, testis and ovary.

The protein resides in the cytoplasm. Its subcellular location is the cytosol. It localises to the nucleus. It is found in the nucleolus. The protein localises to the PML body. Proteolytic cleavage by CASP8 or MALT1 leads to its inactivation. Its function is as follows. Potent suppressor of cytokine production that acts as a regulator of innate immune signaling and inflammation. Acts as a key negative regulator of select cytokine and chemokine responses elicited by TRIF-independent Toll-like receptors (TLRs), thereby limiting inflammatory cytokine responses to minor insults. In response to more threatening pathogens, cleaved by CASP8 downstream of TLR3 or TLR4, leading to its inactivation, thereby allowing production of inflammatory cytokines. Acts as a restriction factor against some viruses, such as HIV-1: restricts HIV-1 replication by binding to HIV-1 mRNAs and mediating their degradation via its ribonuclease activity. Also acts as an inhibitor of the E3 ubiquitin-protein ligase ITCH: acts by interacting with the second WW domain of ITCH, leading to compete with ITCH's substrates and impairing ubiquitination of substrates. In Homo sapiens (Human), this protein is NEDD4-binding protein 1.